A 431-amino-acid polypeptide reads, in one-letter code: Tol-Pal system protein TolB (431 aa).

The N-terminal stretch at 1 to 26 (MSLMTKLGFRALVASCLIAAGSAANA) is a signal peptide. The segment at 411–431 (PQILSVQGGSVREPSWGPFMQ) is disordered.

The protein belongs to the TolB family. The Tol-Pal system is composed of five core proteins: the inner membrane proteins TolA, TolQ and TolR, the periplasmic protein TolB and the outer membrane protein Pal. They form a network linking the inner and outer membranes and the peptidoglycan layer.

It localises to the periplasm. Part of the Tol-Pal system, which plays a role in outer membrane invagination during cell division and is important for maintaining outer membrane integrity. In Burkholderia multivorans (strain ATCC 17616 / 249), this protein is Tol-Pal system protein TolB.